The primary structure comprises 335 residues: Large ribosomal subunit protein uL3 (335 aa).

Positions 1–20 are disordered; sequence MATIHRPRRGSLAFSPRKRA.

This sequence belongs to the universal ribosomal protein uL3 family. Part of the 50S ribosomal subunit. Forms a cluster with proteins L14 and L24e.

One of the primary rRNA binding proteins, it binds directly near the 3'-end of the 23S rRNA, where it nucleates assembly of the 50S subunit. The chain is Large ribosomal subunit protein uL3 (rpl3) from Methanothrix harundinacea (strain 6Ac) (Methanosaeta harundinacea).